Reading from the N-terminus, the 425-residue chain is Serine--tRNA ligase 2 (425 aa).

234–236 (TAE) is a binding site for L-serine. ATP is bound at residue 265-267 (RVE). L-serine is bound at residue Glu-288. ATP is bound at residue 352-355 (EVSS). Residue Ser-388 coordinates L-serine.

The protein belongs to the class-II aminoacyl-tRNA synthetase family. Type-1 seryl-tRNA synthetase subfamily. Homodimer. The tRNA molecule binds across the dimer.

The protein resides in the cytoplasm. It catalyses the reaction tRNA(Ser) + L-serine + ATP = L-seryl-tRNA(Ser) + AMP + diphosphate + H(+). The catalysed reaction is tRNA(Sec) + L-serine + ATP = L-seryl-tRNA(Sec) + AMP + diphosphate + H(+). It participates in aminoacyl-tRNA biosynthesis; selenocysteinyl-tRNA(Sec) biosynthesis; L-seryl-tRNA(Sec) from L-serine and tRNA(Sec): step 1/1. Its function is as follows. Catalyzes the attachment of serine to tRNA(Ser). Is also able to aminoacylate tRNA(Sec) with serine, to form the misacylated tRNA L-seryl-tRNA(Sec), which will be further converted into selenocysteinyl-tRNA(Sec). The sequence is that of Serine--tRNA ligase 2 from Clostridium acetobutylicum (strain ATCC 824 / DSM 792 / JCM 1419 / IAM 19013 / LMG 5710 / NBRC 13948 / NRRL B-527 / VKM B-1787 / 2291 / W).